Reading from the N-terminus, the 640-residue chain is Threonine--tRNA ligase (640 aa).

Residues 1-60 (MKITFPDGAVKEFEPGVSTADIAASISPGLKKKALAGKLNGELLDLVTPIHEDGAIEIVT) enclose the TGS domain. Residues 241–538 (DHRKLGKELE…LIEEYKGAFP (298 aa)) are catalytic. Positions 334, 385, and 515 each coordinate Zn(2+).

This sequence belongs to the class-II aminoacyl-tRNA synthetase family. As to quaternary structure, homodimer. It depends on Zn(2+) as a cofactor.

The protein localises to the cytoplasm. The enzyme catalyses tRNA(Thr) + L-threonine + ATP = L-threonyl-tRNA(Thr) + AMP + diphosphate + H(+). In terms of biological role, catalyzes the attachment of threonine to tRNA(Thr) in a two-step reaction: L-threonine is first activated by ATP to form Thr-AMP and then transferred to the acceptor end of tRNA(Thr). Also edits incorrectly charged L-seryl-tRNA(Thr). This is Threonine--tRNA ligase from Listeria welshimeri serovar 6b (strain ATCC 35897 / DSM 20650 / CCUG 15529 / CIP 8149 / NCTC 11857 / SLCC 5334 / V8).